A 320-amino-acid chain; its full sequence is Phosphate acetyltransferase (320 aa).

This sequence belongs to the phosphate acetyltransferase and butyryltransferase family.

It localises to the cytoplasm. The enzyme catalyses acetyl-CoA + phosphate = acetyl phosphate + CoA. The protein operates within metabolic intermediate biosynthesis; acetyl-CoA biosynthesis; acetyl-CoA from acetate: step 2/2. This is Phosphate acetyltransferase (pta) from Mycoplasma pneumoniae (strain ATCC 29342 / M129 / Subtype 1) (Mycoplasmoides pneumoniae).